A 197-amino-acid polypeptide reads, in one-letter code: NADH-quinone oxidoreductase subunit C (197 aa).

The protein belongs to the complex I 30 kDa subunit family. NDH-1 is composed of 14 different subunits. Subunits NuoB, C, D, E, F, and G constitute the peripheral sector of the complex.

The protein localises to the cell inner membrane. It carries out the reaction a quinone + NADH + 5 H(+)(in) = a quinol + NAD(+) + 4 H(+)(out). Its function is as follows. NDH-1 shuttles electrons from NADH, via FMN and iron-sulfur (Fe-S) centers, to quinones in the respiratory chain. The immediate electron acceptor for the enzyme in this species is believed to be ubiquinone. Couples the redox reaction to proton translocation (for every two electrons transferred, four hydrogen ions are translocated across the cytoplasmic membrane), and thus conserves the redox energy in a proton gradient. This chain is NADH-quinone oxidoreductase subunit C, found in Neisseria meningitidis serogroup C (strain 053442).